Here is a 449-residue protein sequence, read N- to C-terminus: Chlorobenzene dioxygenase subunit alpha (449 aa).

One can recognise a Rieske domain in the interval 54 to 163; it reads WLLLGHETQI…VATYKGLIFA (110 aa). Residues cysteine 96, histidine 98, cysteine 116, and histidine 119 each contribute to the [2Fe-2S] cluster site. Fe cation-binding residues include histidine 222, histidine 228, and aspartate 376.

The protein belongs to the bacterial ring-hydroxylating dioxygenase alpha subunit family. In terms of assembly, this dioxygenase system consists of four proteins: the two subunits of the oxygenase component (TecA1 and TecA2), a ferredoxin (TecA3) and a ferredoxin reductase (TecA4). Requires [2Fe-2S] cluster as cofactor. Fe cation is required as a cofactor.

The enzyme catalyses chlorobenzene + NADH + O2 + H(+) = (1R,2R)-3-chlorocyclohexa-3,5-diene-1,2-diol + NAD(+). It functions in the pathway aromatic compound metabolism. Its function is as follows. Part of the oxygenase component of the chlorobenzene dioxygenase system that catalyzes the dihydroxylation of a range of aromatic compounds, including chlorinated benzenes and toluenes, and dinuclear aromatics such as biphenyl and dibenzo-p-dioxin. The alpha subunit is responsible for substrate specificity. The protein is Chlorobenzene dioxygenase subunit alpha of Cupriavidus sp. (strain PS12).